The primary structure comprises 295 residues: UDP-N-acetylenolpyruvoylglucosamine reductase (295 aa).

The 165-residue stretch at K24–G188 folds into the FAD-binding PCMH-type domain. R168 is a catalytic residue. S217 functions as the Proton donor in the catalytic mechanism. The active site involves E287.

This sequence belongs to the MurB family. It depends on FAD as a cofactor.

It is found in the cytoplasm. It catalyses the reaction UDP-N-acetyl-alpha-D-muramate + NADP(+) = UDP-N-acetyl-3-O-(1-carboxyvinyl)-alpha-D-glucosamine + NADPH + H(+). It functions in the pathway cell wall biogenesis; peptidoglycan biosynthesis. Its function is as follows. Cell wall formation. This is UDP-N-acetylenolpyruvoylglucosamine reductase from Rickettsia akari (strain Hartford).